A 401-amino-acid polypeptide reads, in one-letter code: Beta-ketoadipyl-CoA thiolase (401 aa).

Cysteine 90 acts as the Acyl-thioester intermediate in catalysis. Residues histidine 357 and cysteine 387 each act as proton acceptor in the active site.

The protein belongs to the thiolase-like superfamily. Thiolase family.

The catalysed reaction is succinyl-CoA + acetyl-CoA = 3-oxoadipyl-CoA + CoA. It functions in the pathway aromatic compound metabolism; phenylacetate degradation. Its function is as follows. Catalyzes thiolytic cleavage of beta-ketoadipyl-CoA to succinyl-CoA and acetyl-CoA. The protein is Beta-ketoadipyl-CoA thiolase (paaJ) of Escherichia coli.